The following is a 98-amino-acid chain: Large ribosomal subunit protein uL23 (98 aa).

It belongs to the universal ribosomal protein uL23 family. As to quaternary structure, part of the 50S ribosomal subunit. Contacts protein L29, and trigger factor when it is bound to the ribosome.

Its function is as follows. One of the early assembly proteins it binds 23S rRNA. One of the proteins that surrounds the polypeptide exit tunnel on the outside of the ribosome. Forms the main docking site for trigger factor binding to the ribosome. The sequence is that of Large ribosomal subunit protein uL23 from Hydrogenovibrio crunogenus (strain DSM 25203 / XCL-2) (Thiomicrospira crunogena).